A 350-amino-acid chain; its full sequence is Glycosyltransferase 8 domain-containing protein 2 (350 aa).

Residues 1–6 lie on the Cytoplasmic side of the membrane; the sequence is MALLRK. A helical; Signal-anchor for type II membrane protein transmembrane segment spans residues 7–24; the sequence is INQVLLFLLIVTLCGILY. At 25–349 the chain is on the lumenal side; that stretch reads KKVHKGTMLR…AGIFKLHHPN (325 aa). N-linked (GlcNAc...) asparagine glycosylation occurs at Asn-234.

The protein belongs to the glycosyltransferase 8 family.

Its subcellular location is the membrane. The chain is Glycosyltransferase 8 domain-containing protein 2 (GLT8D2) from Bos taurus (Bovine).